A 451-amino-acid chain; its full sequence is Tubulin alpha-2 chain (451 aa).

GTP-binding residues include Q12, D73, S142, G146, T147, T181, N208, and N230. D73 contacts Mg(2+). Residue E256 is part of the active site.

The protein belongs to the tubulin family. Dimer of alpha and beta chains. A typical microtubule is a hollow water-filled tube with an outer diameter of 25 nm and an inner diameter of 15 nM. Alpha-beta heterodimers associate head-to-tail to form protofilaments running lengthwise along the microtubule wall with the beta-tubulin subunit facing the microtubule plus end conferring a structural polarity. Microtubules usually have 13 protofilaments but different protofilament numbers can be found in some organisms and specialized cells. Mg(2+) serves as cofactor.

The protein resides in the cytoplasm. It is found in the cytoskeleton. It carries out the reaction GTP + H2O = GDP + phosphate + H(+). Tubulin is the major constituent of microtubules, a cylinder consisting of laterally associated linear protofilaments composed of alpha- and beta-tubulin heterodimers. Microtubules grow by the addition of GTP-tubulin dimers to the microtubule end, where a stabilizing cap forms. Below the cap, tubulin dimers are in GDP-bound state, owing to GTPase activity of alpha-tubulin. The chain is Tubulin alpha-2 chain (tubB) from Emericella nidulans (strain FGSC A4 / ATCC 38163 / CBS 112.46 / NRRL 194 / M139) (Aspergillus nidulans).